The sequence spans 1019 residues: TOG array regulator of axonemal microtubules protein 2 (1019 aa).

Disordered stretches follow at residues 28 to 54, 131 to 158, 249 to 311, and 991 to 1019; these read AGPRVLPPGSINSSLPHGEGSLQPEPR, RRLSEGLAASSRASLDPGGGPQGVPLHS, TPSR…AKKP, and SLGGSRKATDRGVAPDSKTTGSSYPFQLD. The span at 1007-1019 shows a compositional bias: polar residues; that stretch reads SKTTGSSYPFQLD.

Belongs to the Crescerin family.

In Homo sapiens (Human), this protein is TOG array regulator of axonemal microtubules protein 2.